Consider the following 290-residue polypeptide: 33 kDa chaperonin (290 aa).

2 disulfide bridges follow: C235-C237 and C268-C271.

This sequence belongs to the HSP33 family. Post-translationally, under oxidizing conditions two disulfide bonds are formed involving the reactive cysteines. Under reducing conditions zinc is bound to the reactive cysteines and the protein is inactive.

The protein resides in the cytoplasm. In terms of biological role, redox regulated molecular chaperone. Protects both thermally unfolding and oxidatively damaged proteins from irreversible aggregation. Plays an important role in the bacterial defense system toward oxidative stress. The protein is 33 kDa chaperonin of Streptococcus pyogenes serotype M18 (strain MGAS8232).